The primary structure comprises 387 residues: Putative F-box protein At1g47800 (387 aa).

An F-box domain is found at 8-54; that stretch reads LQSLDHIPIDVLFEILVKLPAKSVARFLCVSKVWATMIRGEVFIRSF.

The chain is Putative F-box protein At1g47800 from Arabidopsis thaliana (Mouse-ear cress).